Here is a 96-residue protein sequence, read N- to C-terminus: Probable RNA-binding protein YqeI (96 aa).

The 96-residue stretch at 1-96 folds into the CRM domain; the sequence is MLTGKQKRFL…SKENKQIELP (96 aa).

In Bacillus subtilis (strain 168), this protein is Probable RNA-binding protein YqeI (yqeI).